The following is an 89-amino-acid chain: Small ribosomal subunit protein uS15 (89 aa).

Belongs to the universal ribosomal protein uS15 family. In terms of assembly, part of the 30S ribosomal subunit. Forms a bridge to the 50S subunit in the 70S ribosome, contacting the 23S rRNA.

In terms of biological role, one of the primary rRNA binding proteins, it binds directly to 16S rRNA where it helps nucleate assembly of the platform of the 30S subunit by binding and bridging several RNA helices of the 16S rRNA. Its function is as follows. Forms an intersubunit bridge (bridge B4) with the 23S rRNA of the 50S subunit in the ribosome. This chain is Small ribosomal subunit protein uS15, found in Rippkaea orientalis (strain PCC 8801 / RF-1) (Cyanothece sp. (strain PCC 8801)).